The following is a 524-amino-acid chain: Probable glycine dehydrogenase (decarboxylating) subunit 2 (524 aa).

K296 bears the N6-(pyridoxal phosphate)lysine mark.

Belongs to the GcvP family. C-terminal subunit subfamily. As to quaternary structure, the glycine cleavage system is composed of four proteins: P, T, L and H. In this organism, the P 'protein' is a heterodimer of two subunits. The cofactor is pyridoxal 5'-phosphate.

The enzyme catalyses N(6)-[(R)-lipoyl]-L-lysyl-[glycine-cleavage complex H protein] + glycine + H(+) = N(6)-[(R)-S(8)-aminomethyldihydrolipoyl]-L-lysyl-[glycine-cleavage complex H protein] + CO2. Its function is as follows. The glycine cleavage system catalyzes the degradation of glycine. The P protein binds the alpha-amino group of glycine through its pyridoxal phosphate cofactor; CO(2) is released and the remaining methylamine moiety is then transferred to the lipoamide cofactor of the H protein. The protein is Probable glycine dehydrogenase (decarboxylating) subunit 2 of Caulobacter vibrioides (strain ATCC 19089 / CIP 103742 / CB 15) (Caulobacter crescentus).